We begin with the raw amino-acid sequence, 387 residues long: DNA double-strand break repair protein Mre11 (387 aa).

4 residues coordinate Mn(2+): Asp-9, His-11, Asp-50, and Asn-85. Residue His-86 is the Proton donor of the active site. The Mn(2+) site is built by His-150, Asp-181, and His-183. The interval 365 to 387 (AVLDDDADAADDDGRPTTVEEFQ) is disordered. Residues 366-375 (VLDDDADAAD) show a composition bias toward acidic residues.

Belongs to the MRE11/RAD32 family. In terms of assembly, homodimer. Forms a heterotetramer composed of two Mre11 subunits and two Rad50 subunits. Requires Mn(2+) as cofactor.

With respect to regulation, nuclease activity is regulated by Rad50. In terms of biological role, part of the Rad50/Mre11 complex, which is involved in the early steps of DNA double-strand break (DSB) repair. Mre11 binds to DSB ends and has both double-stranded 3'-5' exonuclease activity and single-stranded endonuclease activity. The protein is DNA double-strand break repair protein Mre11 of Halobacterium salinarum (strain ATCC 700922 / JCM 11081 / NRC-1) (Halobacterium halobium).